The primary structure comprises 372 residues: RNA polymerase sigma factor SigA (372 aa).

A sigma-70 factor domain-2 region spans residues 139 to 209 (LAEANLRLVV…TRAIADQART (71 aa)). The short motif at 163–166 (DLIQ) is the Interaction with polymerase core subunit RpoC element. Residues 218–294 (ETINKLIRVQ…DQDALAPSDA (77 aa)) form a sigma-70 factor domain-3 region. A sigma-70 factor domain-4 region spans residues 307–360 (VLDTLTDREENVLRLRFGLDDGRTRTLEEVGKVFGVTRERIRQIEAKALRKLRH). Positions 333–352 (LEEVGKVFGVTRERIRQIEA) form a DNA-binding region, H-T-H motif.

The protein belongs to the sigma-70 factor family. RpoD/SigA subfamily. As to quaternary structure, interacts transiently with the RNA polymerase catalytic core.

The protein localises to the cytoplasm. In terms of biological role, sigma factors are initiation factors that promote the attachment of RNA polymerase to specific initiation sites and are then released. This sigma factor is the primary sigma factor during exponential growth. In Halalkalibacterium halodurans (strain ATCC BAA-125 / DSM 18197 / FERM 7344 / JCM 9153 / C-125) (Bacillus halodurans), this protein is RNA polymerase sigma factor SigA.